A 185-amino-acid polypeptide reads, in one-letter code: ATP-dependent protease subunit HslV (185 aa).

The active site involves Thr12. 3 residues coordinate Na(+): Ala168, Cys171, and Thr174.

This sequence belongs to the peptidase T1B family. HslV subfamily. In terms of assembly, a double ring-shaped homohexamer of HslV is capped on each side by a ring-shaped HslU homohexamer. The assembly of the HslU/HslV complex is dependent on binding of ATP.

It is found in the cytoplasm. The catalysed reaction is ATP-dependent cleavage of peptide bonds with broad specificity.. Its activity is regulated as follows. Allosterically activated by HslU binding. Protease subunit of a proteasome-like degradation complex believed to be a general protein degrading machinery. The chain is ATP-dependent protease subunit HslV from Dinoroseobacter shibae (strain DSM 16493 / NCIMB 14021 / DFL 12).